Reading from the N-terminus, the 911-residue chain is DNA polymerase I (911 aa).

The 95-residue stretch at 186 to 280 (VTPAQYPDLA…DTLRLQPWDR (95 aa)) folds into the 5'-3' exonuclease domain. The 178-residue stretch at 320–497 (RGGLLESGTV…LAAALDAELD (178 aa)) folds into the 3'-5' exonuclease domain.

Belongs to the DNA polymerase type-A family. As to quaternary structure, single-chain monomer with multiple functions.

It carries out the reaction DNA(n) + a 2'-deoxyribonucleoside 5'-triphosphate = DNA(n+1) + diphosphate. In terms of biological role, in addition to polymerase activity, this DNA polymerase exhibits 3'-5' and 5'-3' exonuclease activity. In Mycobacterium leprae (strain TN), this protein is DNA polymerase I (polA).